The sequence spans 201 residues: Protein VirD3 (201 aa).

Disordered stretches follow at residues 28-51 (ASSSALSNVQGDVRDRPIPTSSSR) and 139-171 (RVNSDRRLPTDAENHPETRDPRKGRGSHGVTPA). Basic and acidic residues predominate over residues 141–161 (NSDRRLPTDAENHPETRDPRK).

The protein is Protein VirD3 (virD3) of Rhizobium radiobacter (Agrobacterium tumefaciens).